The chain runs to 200 residues: NAD(P)H dehydrogenase (quinone) (200 aa).

In terms of domain architecture, Flavodoxin-like spans 4-191; sequence VLVLYYSSYG…DIARYQGKRV (188 aa). FMN-binding positions include 10-15 and 79-81; these read SSYGHV and TRF. Tyr-12 is an NAD(+) binding site. Trp-99 lines the substrate pocket. FMN contacts are provided by residues 114-120 and His-135; that span reads STGTQHG.

This sequence belongs to the WrbA family. Requires FMN as cofactor.

The enzyme catalyses a quinone + NADH + H(+) = a quinol + NAD(+). It carries out the reaction a quinone + NADPH + H(+) = a quinol + NADP(+). The chain is NAD(P)H dehydrogenase (quinone) from Burkholderia lata (strain ATCC 17760 / DSM 23089 / LMG 22485 / NCIMB 9086 / R18194 / 383).